Reading from the N-terminus, the 260-residue chain is Indole-3-glycerol phosphate synthase (260 aa).

Belongs to the TrpC family.

It carries out the reaction 1-(2-carboxyphenylamino)-1-deoxy-D-ribulose 5-phosphate + H(+) = (1S,2R)-1-C-(indol-3-yl)glycerol 3-phosphate + CO2 + H2O. It functions in the pathway amino-acid biosynthesis; L-tryptophan biosynthesis; L-tryptophan from chorismate: step 4/5. This Lactiplantibacillus plantarum (strain ATCC BAA-793 / NCIMB 8826 / WCFS1) (Lactobacillus plantarum) protein is Indole-3-glycerol phosphate synthase.